A 1447-amino-acid polypeptide reads, in one-letter code: DNA-directed RNA polymerase subunit beta' (1447 aa).

4 residues coordinate Zn(2+): Cys-70, Cys-72, Cys-85, and Cys-88. Residues Asp-460, Asp-462, and Asp-464 each contribute to the Mg(2+) site. Residues Cys-890, Cys-964, Cys-971, and Cys-974 each contribute to the Zn(2+) site.

It belongs to the RNA polymerase beta' chain family. The RNAP catalytic core consists of 2 alpha, 1 beta, 1 beta' and 1 omega subunit. When a sigma factor is associated with the core the holoenzyme is formed, which can initiate transcription. Requires Mg(2+) as cofactor. The cofactor is Zn(2+).

The enzyme catalyses RNA(n) + a ribonucleoside 5'-triphosphate = RNA(n+1) + diphosphate. In terms of biological role, DNA-dependent RNA polymerase catalyzes the transcription of DNA into RNA using the four ribonucleoside triphosphates as substrates. The chain is DNA-directed RNA polymerase subunit beta' from Desulfosudis oleivorans (strain DSM 6200 / JCM 39069 / Hxd3) (Desulfococcus oleovorans).